The following is an 86-amino-acid chain: Exodeoxyribonuclease 7 small subunit (86 aa).

The protein belongs to the XseB family. Heterooligomer composed of large and small subunits.

It localises to the cytoplasm. The catalysed reaction is Exonucleolytic cleavage in either 5'- to 3'- or 3'- to 5'-direction to yield nucleoside 5'-phosphates.. In terms of biological role, bidirectionally degrades single-stranded DNA into large acid-insoluble oligonucleotides, which are then degraded further into small acid-soluble oligonucleotides. The protein is Exodeoxyribonuclease 7 small subunit of Xanthomonas euvesicatoria pv. vesicatoria (strain 85-10) (Xanthomonas campestris pv. vesicatoria).